We begin with the raw amino-acid sequence, 464 residues long: Protein FAM90A23 (464 aa).

Disordered stretches follow at residues 1–42 (MMAR…DPRL), 69–389 (VPAT…HDGA), and 415–437 (HSPE…SEAP). 2 stretches are compositionally biased toward basic and acidic residues: residues 74–89 (GKKE…KPRA) and 97–114 (NKDK…DPQR). Low complexity predominate over residues 180–197 (LASLSPLRKASLSSSSSL).

This sequence belongs to the FAM90 family.

The sequence is that of Protein FAM90A23 from Homo sapiens (Human).